A 568-amino-acid chain; its full sequence is Urease subunit alpha (568 aa).

One can recognise a Urease domain in the interval 130 to 568 (GGIDSHIHFI…LPMAQRYFLF (439 aa)). Ni(2+) is bound by residues histidine 135, histidine 137, and lysine 218. Lysine 218 is modified (N6-carboxylysine). Residue histidine 220 participates in substrate binding. Residues histidine 247 and histidine 273 each contribute to the Ni(2+) site. Histidine 321 acts as the Proton donor in catalysis. Aspartate 361 provides a ligand contact to Ni(2+).

This sequence belongs to the metallo-dependent hydrolases superfamily. Urease alpha subunit family. In terms of assembly, heterotrimer of UreA (gamma), UreB (beta) and UreC (alpha) subunits. Three heterotrimers associate to form the active enzyme. Requires Ni cation as cofactor. Post-translationally, carboxylation allows a single lysine to coordinate two nickel ions.

Its subcellular location is the cytoplasm. It catalyses the reaction urea + 2 H2O + H(+) = hydrogencarbonate + 2 NH4(+). Its pathway is nitrogen metabolism; urea degradation; CO(2) and NH(3) from urea (urease route): step 1/1. The polypeptide is Urease subunit alpha (Nitrosospira multiformis (strain ATCC 25196 / NCIMB 11849 / C 71)).